The sequence spans 369 residues: Ribonuclease 3 (369 aa).

An RNase III domain is found at 6 to 142 (IGFVQSSINY…IIGAVAADCD (137 aa)). Residue Glu-46 coordinates Mg(2+). Asp-50 is a catalytic residue. Mg(2+) contacts are provided by Asp-128 and Glu-131. Residue Glu-131 is part of the active site. Residues 272–341 (NPASTLHELF…SLKLLKFIAK (70 aa)) enclose the DRBM domain.

It belongs to the ribonuclease III family. Homodimer. Requires Mg(2+) as cofactor.

Its subcellular location is the cytoplasm. It catalyses the reaction Endonucleolytic cleavage to 5'-phosphomonoester.. Functionally, digests double-stranded RNA. Involved in the processing of primary rRNA transcript to yield the immediate precursors to the large and small rRNAs (23S and 16S). Processes some mRNAs, and tRNAs when they are encoded in the rRNA operon. Processes pre-crRNA and tracrRNA of type II CRISPR loci if present in the organism. The chain is Ribonuclease 3 (rnc) from Treponema succinifaciens (strain ATCC 33096 / DSM 2489 / 6091).